Consider the following 218-residue polypeptide: Albicidin resistance protein (218 aa).

The protein localises to the periplasm. Functionally, albicidin resistance protein binds to form a complex without antibiotic activity but without catalyzing any further chemical modifications to albicidin. The protein is Albicidin resistance protein of Klebsiella oxytoca.